Here is a 287-residue protein sequence, read N- to C-terminus: Inorganic pyrophosphatase (287 aa).

Arg-79 lines the diphosphate pocket. Residues Asp-116, Asp-121, and Asp-153 each coordinate Mg(2+).

It belongs to the PPase family. In terms of assembly, homodimer. Mg(2+) is required as a cofactor.

The protein resides in the cytoplasm. The enzyme catalyses diphosphate + H2O = 2 phosphate + H(+). In Kluyveromyces lactis (strain ATCC 8585 / CBS 2359 / DSM 70799 / NBRC 1267 / NRRL Y-1140 / WM37) (Yeast), this protein is Inorganic pyrophosphatase (IPP1).